The primary structure comprises 2079 residues: von Willebrand factor A domain-containing protein DDB_G0286969 (2079 aa).

The 137-residue stretch at 11–147 (EQILPSFISI…ELEIIITYST (137 aa)) folds into the VIT domain. Residues 178 to 203 (NENSTTNTNTQTQPQSVNTTTTTTPS) are disordered. Residues 180 to 203 (NSTTNTNTQTQPQSVNTTTTTTPS) are compositionally biased toward low complexity. The VWFA domain maps to 354–525 (ELIFLVDVSE…KVMRQLKRAL (172 aa)). 5 disordered regions span residues 761–800 (PTTLSGSGIPFYNPSSPNHDRNINTTQQPTPTQSTPLKTP), 832–866 (PFVPSPNKLPTTTTSAPATTPITTPAPTTTTTEVK), 956–1139 (AKPV…TKPT), 1155–1203 (NEPA…VSST), and 1239–1294 (DSNT…ADAE). Composition is skewed to low complexity over residues 785-800 (TTQQPTPTQSTPLKTP), 841-866 (PTTTTSAPATTPITTPAPTTTTTEVK), and 956-973 (AKPVEPAVVQQQQPQQTK). Residues 923 to 957 (EMIKIAEAKAAAEQKAAAEQKAIADAKAAAEQAAK) adopt a coiled-coil conformation. Basic and acidic residues predominate over residues 974–989 (PKADKQSKQNAKDNKQ). Residues 992-1006 (KPVVVEQKPPVVTET) show a composition bias toward low complexity. The segment covering 1007 to 1021 (KPTVATESATPTKPT) has biased composition (polar residues). The span at 1023–1061 (AQAAAAAAAAAQQAAQQAAATTPVKQQPTKQTTPNKSTP) shows a compositional bias: low complexity. Over residues 1092–1111 (KPVETKPVEQTKPVETKPVE) the composition is skewed to basic and acidic residues. The segment covering 1176–1198 (NNNNNNNNNNNNNNNNNNNNNNN) has biased composition (low complexity). The span at 1239–1272 (DSNTKAPDSLKTTPIFSNGPQGISPSSGNGSNKS) shows a compositional bias: polar residues. The segment covering 1280–1292 (DRGGRGGRDRNAD) has biased composition (basic and acidic residues). In terms of domain architecture, MIF4G spans 1317–1527 (LKKFKFNLNR…LDLIDLRANK (211 aa)). Residues 1530–1755 (PKNSTQTKTK…PAPVEPVKPK (226 aa)) form a disordered region. Composition is skewed to basic and acidic residues over residues 1538-1550 (TKKDESDKEERFI), 1557-1599 (QKRE…RDAP), and 1621-1634 (NNRDKGGRGGDRSG). 2 stretches are compositionally biased toward low complexity: residues 1635–1659 (GKQSPSGKKDSGFGPSSGGSSLFGS) and 1688–1699 (SSSIPSIPNRSN). Residues 1725 to 1740 (SNDRDSRGPSKPDNRK) are compositionally biased toward basic and acidic residues. Residues 1760-1882 (KIEDDISMTL…PLNYLEEAYA (123 aa)) enclose the MI domain.

In Dictyostelium discoideum (Social amoeba), this protein is von Willebrand factor A domain-containing protein DDB_G0286969.